Consider the following 83-residue polypeptide: Small ribosomal subunit protein uS17 (83 aa).

Belongs to the universal ribosomal protein uS17 family. As to quaternary structure, part of the 30S ribosomal subunit.

Functionally, one of the primary rRNA binding proteins, it binds specifically to the 5'-end of 16S ribosomal RNA. This Francisella philomiragia subsp. philomiragia (strain ATCC 25017 / CCUG 19701 / FSC 153 / O#319-036) protein is Small ribosomal subunit protein uS17.